A 217-amino-acid chain; its full sequence is Probable transaldolase (217 aa).

The active-site Schiff-base intermediate with substrate is K83.

This sequence belongs to the transaldolase family. Type 3B subfamily.

Its subcellular location is the cytoplasm. It catalyses the reaction D-sedoheptulose 7-phosphate + D-glyceraldehyde 3-phosphate = D-erythrose 4-phosphate + beta-D-fructose 6-phosphate. It functions in the pathway carbohydrate degradation; pentose phosphate pathway; D-glyceraldehyde 3-phosphate and beta-D-fructose 6-phosphate from D-ribose 5-phosphate and D-xylulose 5-phosphate (non-oxidative stage): step 2/3. In terms of biological role, transaldolase is important for the balance of metabolites in the pentose-phosphate pathway. This Roseobacter denitrificans (strain ATCC 33942 / OCh 114) (Erythrobacter sp. (strain OCh 114)) protein is Probable transaldolase.